Reading from the N-terminus, the 209-residue chain is Large ribosomal subunit protein uL3 (209 aa).

Belongs to the universal ribosomal protein uL3 family. Part of the 50S ribosomal subunit. Forms a cluster with proteins L14 and L19.

Its function is as follows. One of the primary rRNA binding proteins, it binds directly near the 3'-end of the 23S rRNA, where it nucleates assembly of the 50S subunit. This is Large ribosomal subunit protein uL3 from Brevibacillus brevis (strain 47 / JCM 6285 / NBRC 100599).